A 307-amino-acid chain; its full sequence is 4-hydroxy-tetrahydrodipicolinate synthase (307 aa).

Pyruvate is bound at residue threonine 49. Residue tyrosine 138 is the Proton donor/acceptor of the active site. The Schiff-base intermediate with substrate role is filled by lysine 166. Isoleucine 207 is a pyruvate binding site.

The protein belongs to the DapA family. As to quaternary structure, homotetramer; dimer of dimers.

The protein resides in the cytoplasm. The enzyme catalyses L-aspartate 4-semialdehyde + pyruvate = (2S,4S)-4-hydroxy-2,3,4,5-tetrahydrodipicolinate + H2O + H(+). Its pathway is amino-acid biosynthesis; L-lysine biosynthesis via DAP pathway; (S)-tetrahydrodipicolinate from L-aspartate: step 3/4. Its function is as follows. Catalyzes the condensation of (S)-aspartate-beta-semialdehyde [(S)-ASA] and pyruvate to 4-hydroxy-tetrahydrodipicolinate (HTPA). This chain is 4-hydroxy-tetrahydrodipicolinate synthase, found in Limosilactobacillus reuteri (strain DSM 20016) (Lactobacillus reuteri).